A 634-amino-acid polypeptide reads, in one-letter code: Factor of DNA methylation 1 (634 aa).

Residues 288–469 are a coiled coil; the sequence is LDEKKNLHQA…LESMNSVLMT (182 aa). The segment covering 349-364 has biased composition (basic and acidic residues); the sequence is ELDRQKLDEDKRKSDA. Residues 349-375 are disordered; it reads ELDRQKLDEDKRKSDAMNKSLQLASRE.

In terms of assembly, homodimer. Interacts with IDN2 and AGO4. Forms a complex with IDN2 and FMD2/INDL2. In terms of tissue distribution, highly expressed in flowers and at lower levels in roots, leaves and stems.

Functionally, forms a complex with IDN2 and FDM2/IDNL2 that is required for RNA-directed DNA methylation (RdDM) and that functions at a downstream step of the RdDM pathway. Required for de novo DNA methylation and 24 nucleotide small interfering RNA (siRNA) accumulation. Binds unmethylated but not methylated DNAs through its coiled-coil domain. May bind double-stranded RNAs (dsRNAs) with 5'-overhangs through its XS domain. However, according to, FMD1 does not bind dsRNAs. This chain is Factor of DNA methylation 1, found in Arabidopsis thaliana (Mouse-ear cress).